A 112-amino-acid polypeptide reads, in one-letter code: DNA-binding protein TON_1102 (112 aa).

Belongs to the PDCD5 family.

The chain is DNA-binding protein TON_1102 from Thermococcus onnurineus (strain NA1).